Here is a 431-residue protein sequence, read N- to C-terminus: Glutamate-1-semialdehyde 2,1-aminomutase (431 aa).

Lys270 is modified (N6-(pyridoxal phosphate)lysine).

It belongs to the class-III pyridoxal-phosphate-dependent aminotransferase family. HemL subfamily. As to quaternary structure, homodimer. The cofactor is pyridoxal 5'-phosphate.

It localises to the cytoplasm. The catalysed reaction is (S)-4-amino-5-oxopentanoate = 5-aminolevulinate. The protein operates within porphyrin-containing compound metabolism; protoporphyrin-IX biosynthesis; 5-aminolevulinate from L-glutamyl-tRNA(Glu): step 2/2. The chain is Glutamate-1-semialdehyde 2,1-aminomutase from Limosilactobacillus reuteri subsp. reuteri (strain JCM 1112) (Lactobacillus reuteri).